Consider the following 382-residue polypeptide: Mannitol-1-phosphate 5-dehydrogenase (382 aa).

3–14 (ALHFGAGNIGRG) contacts NAD(+). Lys269 carries the N6-acetyllysine modification.

This sequence belongs to the mannitol dehydrogenase family.

It catalyses the reaction D-mannitol 1-phosphate + NAD(+) = beta-D-fructose 6-phosphate + NADH + H(+). The polypeptide is Mannitol-1-phosphate 5-dehydrogenase (Escherichia coli (strain K12 / MC4100 / BW2952)).